A 167-amino-acid polypeptide reads, in one-letter code: Protein FimG (167 aa).

A signal peptide spans 1–23 (MKWCKRGYVLAAILALASATIQA). The cysteines at positions 39 and 77 are disulfide-linked.

It belongs to the fimbrial protein family.

It localises to the fimbrium. Involved in regulation of length and mediation of adhesion of type 1 fimbriae (but not necessary for the production of fimbriae). Involved in the integration of FimH in the fimbriae. In Escherichia coli (strain K12), this protein is Protein FimG (fimG).